The following is a 276-amino-acid chain: Large ribosomal subunit protein uL2 (276 aa).

The interval Thr-219–Lys-276 is disordered.

Belongs to the universal ribosomal protein uL2 family. Part of the 50S ribosomal subunit. Forms a bridge to the 30S subunit in the 70S ribosome.

Its function is as follows. One of the primary rRNA binding proteins. Required for association of the 30S and 50S subunits to form the 70S ribosome, for tRNA binding and peptide bond formation. It has been suggested to have peptidyltransferase activity; this is somewhat controversial. Makes several contacts with the 16S rRNA in the 70S ribosome. The protein is Large ribosomal subunit protein uL2 of Alkaliphilus oremlandii (strain OhILAs) (Clostridium oremlandii (strain OhILAs)).